Here is a 244-residue protein sequence, read N- to C-terminus: Eukaryotic translation initiation factor 4E type 1B (244 aa).

Residues 1 to 26 (MNKVEGGGHKEEVVVKEKEVVKEKPS) show a composition bias toward basic and acidic residues. The interval 1 to 57 (MNKVEGGGHKEEVVVKEKEVVKEKPSEATAEGVQAGEAKDLPGSLKTQRRKAHREHP) is disordered. The tract at residues 65–68 (HPLQ) is EIF4EBP1/2/3 binding. MRNA is bound at residue 84–85 (WQ). An EIF4EBP1/2/3 binding region spans residues 101 to 105 (WAVYS). 130-131 (WE) contributes to the mRNA binding site. The EIF4EBP1/2/3 binding stretch occupies residues 160 to 167 (ETLLCLVG). MRNA is bound by residues 185–190 (RTKRDK) and 233–235 (AKS).

The protein belongs to the eukaryotic initiation factor 4E family. EIF4F is a multi-subunit complex, the composition of which varies with external and internal environmental conditions. It is composed of at least EIF4A, EIF4E and EIF4G.

Its function is as follows. Recognizes and binds the 7-methylguanosine-containing mRNA cap during an early step in the initiation of protein synthesis and facilitates ribosome binding by inducing the unwinding of the mRNAs secondary structures. The polypeptide is Eukaryotic translation initiation factor 4E type 1B (Eif4e1b) (Mus musculus (Mouse)).